A 148-amino-acid chain; its full sequence is MKKITGQVKLQIPAGKANPAPPIGPALGQQGVNIMEFCKQFNAKTQAEAKEALIIPVVITVYADRSFTFILKTPPAAVLIKKAAGLHTEKKKGSGAKKPGKEKVGQITRAQLEEIAKKKIQDTTAASLEACMSTIAGTARSMGIDVVG.

The protein belongs to the universal ribosomal protein uL11 family. Part of the ribosomal stalk of the 50S ribosomal subunit. Interacts with L10 and the large rRNA to form the base of the stalk. L10 forms an elongated spine to which L12 dimers bind in a sequential fashion forming a multimeric L10(L12)X complex. One or more lysine residues are methylated.

Functionally, forms part of the ribosomal stalk which helps the ribosome interact with GTP-bound translation factors. The chain is Large ribosomal subunit protein uL11 from Myxococcus xanthus (strain DK1622).